The sequence spans 83 residues: Blackelin-5 (83 aa).

An N-terminal signal peptide occupies residues 1-24 (MSSGGLLLLLGLLTLWEGLTPVSS). One can recognise a BPTI/Kunitz inhibitor domain in the interval 31–81 (CELPADSGSCKGNFQAFYYHPVHRTCLEFIYGGCEGNANNFKTIDECKRTC). 3 disulfide bridges follow: cysteine 31–cysteine 81, cysteine 40–cysteine 64, and cysteine 56–cysteine 77.

It is found in the secreted. In terms of biological role, serine protease inhibitor. This is Blackelin-5 from Pseudechis porphyriacus (Red-bellied black snake).